The chain runs to 1033 residues: Complement receptor type 2 (1033 aa).

The N-terminal stretch at Met1 to Gly20 is a signal peptide. 15 consecutive Sushi domains span residues Ile21–Tyr84, Ser89–Ser148, Leu152–Glu212, Ala213–Glu273, Ile274–Leu344, Val349–Lys408, Glu409–Val468, Ala469–Glu524, Ile525–Leu595, Val600–Lys659, Glu660–Val716, Ile717–Arg781, Thr786–Lys845, Ile849–Glu909, and Val910–Ser970. Topologically, residues Ile21–Arg971 are extracellular. Cystine bridges form between Cys23-Cys65, Cys51-Cys82, Cys91-Cys132, Cys118-Cys146, Cys154-Cys197, Cys183-Cys210, Cys215-Cys256, Cys242-Cys271, Cys276-Cys325, Cys305-Cys342, Cys351-Cys393, Cys379-Cys406, Cys410-Cys453, Cys439-Cys466, Cys471-Cys509, Cys495-Cys522, Cys527-Cys576, Cys556-Cys593, Cys602-Cys644, Cys630-Cys657, Cys662-Cys699, Cys685-Cys714, Cys719-Cys762, Cys748-Cys779, Cys788-Cys830, Cys816-Cys843, Cys851-Cys894, and Cys880-Cys907. N-linked (GlcNAc...) asparagine glycosylation is found at Asn121 and Asn127. Asn294 is a glycosylation site (N-linked (GlcNAc...) asparagine). N-linked (GlcNAc...) asparagine glycosylation is present at Asn372. N-linked (GlcNAc...) asparagine glycosylation is present at Asn492. Asn623 carries N-linked (GlcNAc...) asparagine glycosylation. N-linked (GlcNAc...) asparagine glycosylation is present at Asn682. Asn800, Asn823, and Asn861 each carry an N-linked (GlcNAc...) asparagine glycan. An N-linked (GlcNAc...) asparagine glycan is attached at Asn911. 2 disulfides stabilise this stretch: Cys912-Cys955 and Cys941-Cys968. A helical membrane pass occupies residues Ser972–Ser999. Residues Lys1000–Ser1033 are Cytoplasmic-facing.

This sequence belongs to the receptors of complement activation (RCA) family. As to quaternary structure, interacts (via Sushi domain 1 and 2) with C3. Interacts with CD19. Part of a complex composed of CD19, CR2/CD21, CD81 and IFITM1/CD225 in the membrane of mature B-cells. Interacts (via Sushi domain 1 and 2) with FCER2 (via the C-terminus). Interacts with CD23. Interacts with FCRL5. Interacts with CR1. Interacts with INFNA1. In terms of assembly, (Microbial infection) Interacts with Epstein-Barr virus gp350 protein. As to expression, mature B-lymphocytes, T-lymphocytes, pharyngeal epithelial cells, astrocytes and follicular dendritic cells of the spleen.

Its subcellular location is the cell membrane. Serves as a receptor for various ligands including complement component CD3d, HNRNPU OR IFNA1. When C3d is bound to antigens, attaches to C3d on B-cell surface and thereby facilitates the recognition and uptake of antigens by B-cells. This interaction enhances B-cell activation and subsequent immune responses. Forms a complex with several partners on the surface of B-cells including CD19, FCRL5 and CD81, to form the B-cell coreceptor complex that plays a crucial role in B-cell activation and signaling. Also induces specific intracellular signaling separately from the BCR and CD19 by activating the tyrosine kinase SRC, which then phosphorylates nucleolin/NCL and triggers AKT and GSK3 kinase activities in a SYK/CD19-independent manner. Acts as a ligand for CD23 (FcepsilonRII), a low-affinity receptor for IgE, which is expressed on B-cells and other immune cells, and thus participates in the regulation of IgE production. Its function is as follows. (Microbial infection) Acts as a receptor for Epstein-Barr virus. This Homo sapiens (Human) protein is Complement receptor type 2 (CR2).